Consider the following 262-residue polypeptide: RNA-binding protein 7 (262 aa).

An N-acetylglycine modification is found at G2. The RRM domain maps to 10-87; it reads RTLFVGNLET…RPIKIQFRAG (78 aa). ZCCHC8 binding stretches follow at residues 25 to 35 and 59 to 76; these read LLFELFHQAGP and HEVS…IKLF. Residues 95 to 121 are disordered; sequence VSLSYPQHHVGNSSPTSTSPSRTVDNM. Residues S133 and S134 each carry the phosphoserine modification. Omega-N-methylarginine is present on R149. Disordered regions lie at residues 159–212 and 242–262; these read SPHL…HYSR and SHDY…SSRH. Positions 165-194 are enriched in polar residues; that stretch reads SGFSPSAQSHNHTFNQSSSSQWRQDTPSSQ. At S201 the chain carries Phosphoserine. The span at 242 to 253 shows a compositional bias: basic and acidic residues; sequence SHDYDNRRDSGR.

In terms of assembly, component of the nuclear exosome targeting (NEXT) complex composed of MTREX, ZCCHC8, and RBM7 that directs a subset of non-coding short-lived RNAs for exosomal degradation. Interacts with ZCCHC8 and SF3B2/SAP145. Binds to MTREX through ZCCHC8. Interacts with YWHAE and YWHAZ; these interactions are stress-dependent and RBM7 phosphorylation dependent; release RNA from the NEXT complex and may affect RNA targeting to the nuclear RNA exosomome for degradation. Interacts with MEPCE and LARP7, the core subunits of 7SK snRNP; upon genotoxic stress this interaction is enhanced, triggering the release of inactive P-TEFb complex from the core and P-TEFb complex activation. In terms of processing, phosphorylated at Ser-133 by MAPK14/p38-alpha-activated MAPKAPK2/MK2; this phosphorylation is stress-dependent; this phosphorylation decreases its RNA-binding capacity therefore affecting RNA nuclear exosome-mediated degradation. This phosphorylation mediates YWHAE and YWHAZ interactions.

It is found in the nucleus. The protein resides in the nucleoplasm. In terms of biological role, RNA-binding subunit of the trimeric nuclear exosome targeting (NEXT) complex, a complex that functions as an RNA exosome cofactor that directs a subset of non-coding short-lived RNAs for exosomal degradation. NEXT is involved in surveillance and turnover of aberrant transcripts and non-coding RNAs. Binds preferentially polyuridine sequences and associates with newly synthesized RNAs, including pre-mRNAs and short-lived exosome substrates such as promoter upstream transcripts (PROMPTs), enhancer RNAs (eRNAs), and 3'-extended products from small nuclear RNAs (snRNAs). Participates in several biological processes including DNA damage response (DDR) and stress response. During stress response, activation of the p38MAPK-MK2 pathway decreases RBM7-RNA-binding and subsequently the RNA exosome degradation activities, thereby modulating the turnover of non-coding transcriptome. Participates in DNA damage response (DDR), through its interaction with MEPCE and LARP7, the core subunits of 7SK snRNP complex, that release the positive transcription elongation factor b (P-TEFb) complex from the 7SK snRNP. In turn, activation of P-TEFb complex induces the transcription of P-TEFb-dependent DDR genes to promote cell viability. This chain is RNA-binding protein 7, found in Bos taurus (Bovine).